The chain runs to 496 residues: Xylulose kinase (496 aa).

83–84 (MH) serves as a coordination point for substrate. The active-site Proton acceptor is Asp237.

Belongs to the FGGY kinase family.

It carries out the reaction D-xylulose + ATP = D-xylulose 5-phosphate + ADP + H(+). In terms of biological role, catalyzes the phosphorylation of D-xylulose to D-xylulose 5-phosphate. This is Xylulose kinase from Staphylococcus epidermidis (strain ATCC 12228 / FDA PCI 1200).